A 286-amino-acid polypeptide reads, in one-letter code: ATP synthase gamma chain (286 aa).

Belongs to the ATPase gamma chain family. In terms of assembly, F-type ATPases have 2 components, CF(1) - the catalytic core - and CF(0) - the membrane proton channel. CF(1) has five subunits: alpha(3), beta(3), gamma(1), delta(1), epsilon(1). CF(0) has three main subunits: a, b and c.

It is found in the cell inner membrane. Produces ATP from ADP in the presence of a proton gradient across the membrane. The gamma chain is believed to be important in regulating ATPase activity and the flow of protons through the CF(0) complex. The sequence is that of ATP synthase gamma chain from Shewanella frigidimarina (strain NCIMB 400).